The chain runs to 288 residues: Undecaprenyl-diphosphatase (288 aa).

Transmembrane regions (helical) follow at residues 11 to 31 (LDLW…FLPI), 49 to 69 (PGVA…LSYF), 94 to 114 (AQMG…GLLI), 129 to 149 (LAAI…AEQL), 159 to 179 (LRLA…IPGV), 199 to 219 (AARF…LVEL), 234 to 254 (VLAI…AWLL), and 265 to 285 (FVVY…TGTL).

The protein belongs to the UppP family.

The protein localises to the cell inner membrane. It carries out the reaction di-trans,octa-cis-undecaprenyl diphosphate + H2O = di-trans,octa-cis-undecaprenyl phosphate + phosphate + H(+). Its function is as follows. Catalyzes the dephosphorylation of undecaprenyl diphosphate (UPP). Confers resistance to bacitracin. This Synechococcus elongatus (strain ATCC 33912 / PCC 7942 / FACHB-805) (Anacystis nidulans R2) protein is Undecaprenyl-diphosphatase.